Consider the following 326-residue polypeptide: Ribose-phosphate pyrophosphokinase 4 (326 aa).

The Mg(2+) site is built by Asp-140, His-142, His-151, and Asp-155.

Belongs to the ribose-phosphate pyrophosphokinase family.

Its subcellular location is the cytoplasm. The catalysed reaction is D-ribose 5-phosphate + ATP = 5-phospho-alpha-D-ribose 1-diphosphate + AMP + H(+). It functions in the pathway metabolic intermediate biosynthesis; 5-phospho-alpha-D-ribose 1-diphosphate biosynthesis; 5-phospho-alpha-D-ribose 1-diphosphate from D-ribose 5-phosphate (route I): step 1/1. Its function is as follows. 5-phosphoribose 1-diphosphate synthase involved in nucleotide, histidine, and tryptophan biosynthesis. Active in heteromultimeric complexes with other 5-phosphoribose 1-diphosphate synthases (PRS2, PRS3, PRS4 and PRS5). This Saccharomyces cerevisiae (strain ATCC 204508 / S288c) (Baker's yeast) protein is Ribose-phosphate pyrophosphokinase 4 (PRS4).